The chain runs to 291 residues: Ribosomal RNA small subunit methyltransferase I (291 aa).

It belongs to the methyltransferase superfamily. RsmI family.

It is found in the cytoplasm. It carries out the reaction cytidine(1402) in 16S rRNA + S-adenosyl-L-methionine = 2'-O-methylcytidine(1402) in 16S rRNA + S-adenosyl-L-homocysteine + H(+). Functionally, catalyzes the 2'-O-methylation of the ribose of cytidine 1402 (C1402) in 16S rRNA. This chain is Ribosomal RNA small subunit methyltransferase I, found in Neisseria meningitidis serogroup A / serotype 4A (strain DSM 15465 / Z2491).